The chain runs to 229 residues: DNA repair protein RecO (229 aa).

It belongs to the RecO family.

Involved in DNA repair and RecF pathway recombination. The chain is DNA repair protein RecO from Legionella pneumophila (strain Paris).